Reading from the N-terminus, the 564-residue chain is Eukaryotic translation initiation factor 3 subunit L (564 aa).

S2 is subject to N-acetylserine. Positions 331–537 (DAIRVFANIL…IHIADTKVAR (207 aa)) constitute a PCI domain. N6-acetyllysine occurs at positions 465 and 549.

Belongs to the eIF-3 subunit L family. As to quaternary structure, component of the eukaryotic translation initiation factor 3 (eIF-3) complex, which is composed of 13 subunits: EIF3A, EIF3B, EIF3C, EIF3D, EIF3E, EIF3F, EIF3G, EIF3H, EIF3I, EIF3J, EIF3K, EIF3L and EIF3M. The eIF-3 complex appears to include 3 stable modules: module A is composed of EIF3A, EIF3B, EIF3G and EIF3I; module B is composed of EIF3F, EIF3H, and EIF3M; and module C is composed of EIF3C, EIF3D, EIF3E, EIF3K and EIF3L. EIF3C of module C binds EIF3B of module A and EIF3H of module B, thereby linking the three modules. EIF3J is a labile subunit that binds to the eIF-3 complex via EIF3B. The eIF-3 complex interacts with RPS6KB1 under conditions of nutrient depletion. Mitogenic stimulation leads to binding and activation of a complex composed of MTOR and RPTOR, leading to phosphorylation and release of RPS6KB1 and binding of EIF4B to eIF-3. Interacts with RRN3.

The protein localises to the cytoplasm. Component of the eukaryotic translation initiation factor 3 (eIF-3) complex, which is required for several steps in the initiation of protein synthesis. The eIF-3 complex associates with the 40S ribosome and facilitates the recruitment of eIF-1, eIF-1A, eIF-2:GTP:methionyl-tRNAi and eIF-5 to form the 43S pre-initiation complex (43S PIC). The eIF-3 complex stimulates mRNA recruitment to the 43S PIC and scanning of the mRNA for AUG recognition. The eIF-3 complex is also required for disassembly and recycling of post-termination ribosomal complexes and subsequently prevents premature joining of the 40S and 60S ribosomal subunits prior to initiation. The eIF-3 complex specifically targets and initiates translation of a subset of mRNAs involved in cell proliferation, including cell cycling, differentiation and apoptosis, and uses different modes of RNA stem-loop binding to exert either translational activation or repression. This chain is Eukaryotic translation initiation factor 3 subunit L, found in Bos taurus (Bovine).